The primary structure comprises 284 residues: UPF0294 protein VV1_1880 (284 aa).

Belongs to the UPF0294 family.

It is found in the cytoplasm. The polypeptide is UPF0294 protein VV1_1880 (Vibrio vulnificus (strain CMCP6)).